Reading from the N-terminus, the 621-residue chain is MSNQEYTFQTEINQLLDLMIHSMYSNKEIFLRELISNASDALDKLNYLMLTDEKLKGLKITPSIHLSFDSQKKTLTIKDNGIGMDKNDLIEHLGTIAKSGTKSFLSALSGDKKKDSALIGQFGVGFYSAFMVAGKIVVQTKKVTSEQAYAWVSDGKGKFEINECIKDEQGTEITLFLKDEDANFASRWEIDSIVKKYSEHIPFPIFLTYTDTKMEGEGDHKKEVKEEKCEQINQASALWKMNKSELKDKDYKEFYKSFAHDNSEPLSYIHNKVEGSLEYTTLFYIPSVAPFDMFRVDYKSGVKLYVKRVFITDDDKELLPSYLRFIKGVIDSEDLPLNVSREILQQNKILANIRSASVKKILGEIEKLSKDNENYHKFYEPFGKVLKEGLYGDFENKEKLLELLRFYSKDKEKLISLKEYKENLKENQKSIYYLLGENLDLLKASPILEKYAQKGYDVLLLSDEIDAFVMPSVNEYDKMPFRDASHSESLKELGLEEINDEVKNQFKDLIKAFEENLKDEIKGVELSSHLTSAVALIGDEQNAMMANLMRQMGQNMPESKKTLELNPNHAILQKLLKCEDKEQMSAFIWLLYDGAKLLEKGALKDAKSFNERLNSVLLKAL.

The interval 1-341 (MSNQEYTFQT…SEDLPLNVSR (341 aa)) is a; substrate-binding. The segment at 342 to 547 (EILQQNKILA…GDEQNAMMAN (206 aa)) is b. The c stretch occupies residues 548–621 (LMRQMGQNMP…RLNSVLLKAL (74 aa)).

Belongs to the heat shock protein 90 family. Homodimer.

The protein localises to the cytoplasm. Its function is as follows. Molecular chaperone. Has ATPase activity. In Helicobacter acinonychis (strain Sheeba), this protein is Chaperone protein HtpG.